The primary structure comprises 103 residues: Small ribosomal subunit protein uS10 (103 aa).

It belongs to the universal ribosomal protein uS10 family. Part of the 30S ribosomal subunit.

Functionally, involved in the binding of tRNA to the ribosomes. In Borrelia duttonii (strain Ly), this protein is Small ribosomal subunit protein uS10.